The primary structure comprises 190 residues: Shikimate kinase (190 aa).

13–18 provides a ligand contact to ATP; that stretch reads GSGKTT. Mg(2+) is bound at residue Thr-17. Substrate-binding residues include Asp-35, Arg-59, and Gly-81. Arg-119 lines the ATP pocket. Residue Arg-138 coordinates substrate. Gln-155 provides a ligand contact to ATP.

This sequence belongs to the shikimate kinase family. As to quaternary structure, monomer. Mg(2+) serves as cofactor.

The protein resides in the cytoplasm. The enzyme catalyses shikimate + ATP = 3-phosphoshikimate + ADP + H(+). It functions in the pathway metabolic intermediate biosynthesis; chorismate biosynthesis; chorismate from D-erythrose 4-phosphate and phosphoenolpyruvate: step 5/7. In terms of biological role, catalyzes the specific phosphorylation of the 3-hydroxyl group of shikimic acid using ATP as a cosubstrate. The protein is Shikimate kinase of Nitrosococcus oceani (strain ATCC 19707 / BCRC 17464 / JCM 30415 / NCIMB 11848 / C-107).